A 191-amino-acid chain; its full sequence is Prostaglandin-H2 D-isomerase (191 aa).

The N-terminal stretch at 1-24 (MAALHTLWMGLVLLGVLGVLQTQA) is a signal peptide. Gln-25 bears the Pyrrolidone carboxylic acid mark. Residue Asn-51 is glycosylated (N-linked (GlcNAc...) asparagine). The Nucleophile role is filled by Cys-65. The N-linked (GlcNAc...) asparagine glycan is linked to Asn-78. Residues Cys-89 and Cys-186 are joined by a disulfide bond.

This sequence belongs to the calycin superfamily. Lipocalin family. As to quaternary structure, monomer.

It is found in the rough endoplasmic reticulum. The protein resides in the nucleus membrane. It localises to the golgi apparatus. The protein localises to the cytoplasm. Its subcellular location is the perinuclear region. It is found in the secreted. It catalyses the reaction prostaglandin H2 = prostaglandin D2. In terms of biological role, catalyzes the conversion of PGH2 to PGD2, a prostaglandin involved in smooth muscle contraction/relaxation and a potent inhibitor of platelet aggregation. Involved in a variety of CNS functions, such as sedation, NREM sleep and PGE2-induced allodynia, and may have an anti-apoptotic role in oligodendrocytes. Binds small non-substrate lipophilic molecules, including biliverdin, bilirubin, retinal, retinoic acid and thyroid hormone, and may act as a scavenger for harmful hydrophobic molecules and as a secretory retinoid and thyroid hormone transporter. Possibly involved in development and maintenance of the blood-brain, blood-retina, blood-aqueous humor and blood-testis barrier. It is likely to play important roles in both maturation and maintenance of the central nervous system and male reproductive system. Involved in PLA2G3-dependent maturation of mast cells. PLA2G3 is secreted by immature mast cells and acts on nearby fibroblasts upstream to PTDGS to synthesize PGD2, which in turn promotes mast cell maturation and degranulation via PTGDR. In Ursus arctos (Brown bear), this protein is Prostaglandin-H2 D-isomerase (PTGDS).